Here is an 867-residue protein sequence, read N- to C-terminus: Translation initiation factor IF-2 (867 aa).

In terms of domain architecture, tr-type G spans 367-534; the sequence is TRAPVVTIMG…AILLQSEILE (168 aa). The segment at 376-383 is G1; the sequence is GHVDHGKT. 376–383 lines the GTP pocket; that stretch reads GHVDHGKT. Residues 401-405 are G2; sequence GITQN. The segment at 422–425 is G3; that stretch reads DTPG. Residues 422–426 and 476–479 contribute to the GTP site; these read DTPGH and NKID. The G4 stretch occupies residues 476–479; the sequence is NKID. Residues 512–514 are G5; it reads SAK.

Belongs to the TRAFAC class translation factor GTPase superfamily. Classic translation factor GTPase family. IF-2 subfamily.

The protein localises to the cytoplasm. Its function is as follows. One of the essential components for the initiation of protein synthesis. Protects formylmethionyl-tRNA from spontaneous hydrolysis and promotes its binding to the 30S ribosomal subunits. Also involved in the hydrolysis of GTP during the formation of the 70S ribosomal complex. This chain is Translation initiation factor IF-2, found in Buchnera aphidicola subsp. Schizaphis graminum (strain Sg).